The chain runs to 527 residues: Bifunctional purine biosynthesis protein PurH (527 aa).

The region spanning 1 to 149 (MASDFLPVRR…KNFARVAVAT (149 aa)) is the MGS-like domain.

The protein belongs to the PurH family.

The catalysed reaction is (6R)-10-formyltetrahydrofolate + 5-amino-1-(5-phospho-beta-D-ribosyl)imidazole-4-carboxamide = 5-formamido-1-(5-phospho-D-ribosyl)imidazole-4-carboxamide + (6S)-5,6,7,8-tetrahydrofolate. It carries out the reaction IMP + H2O = 5-formamido-1-(5-phospho-D-ribosyl)imidazole-4-carboxamide. The protein operates within purine metabolism; IMP biosynthesis via de novo pathway; 5-formamido-1-(5-phospho-D-ribosyl)imidazole-4-carboxamide from 5-amino-1-(5-phospho-D-ribosyl)imidazole-4-carboxamide (10-formyl THF route): step 1/1. It functions in the pathway purine metabolism; IMP biosynthesis via de novo pathway; IMP from 5-formamido-1-(5-phospho-D-ribosyl)imidazole-4-carboxamide: step 1/1. The polypeptide is Bifunctional purine biosynthesis protein PurH (Xanthomonas oryzae pv. oryzae (strain KACC10331 / KXO85)).